A 327-amino-acid polypeptide reads, in one-letter code: Porphobilinogen deaminase (327 aa).

Cys251 bears the S-(dipyrrolylmethanemethyl)cysteine mark.

It belongs to the HMBS family. Dipyrromethane is required as a cofactor.

The enzyme catalyses 4 porphobilinogen + H2O = hydroxymethylbilane + 4 NH4(+). It functions in the pathway porphyrin-containing compound metabolism; protoporphyrin-IX biosynthesis; coproporphyrinogen-III from 5-aminolevulinate: step 2/4. Its function is as follows. Catalyzes the tetrapolymerization of the monopyrrole porphobilinogen (PBG) into the hydroxymethylbilane pre-uroporphyrinogen in several discrete steps. The sequence is that of Porphobilinogen deaminase (HEM3) from Saccharomyces cerevisiae (strain ATCC 204508 / S288c) (Baker's yeast).